We begin with the raw amino-acid sequence, 318 residues long: NF-kappa-B inhibitor alpha (318 aa).

A disordered region spans residues 1–44; sequence MLSAHRPAEPPAVEGCEPPRKERQGGLLPPDDRHDSGLDSMKEE. Residues 17–44 show a composition bias toward basic and acidic residues; it reads EPPRKERQGGLLPPDDRHDSGLDSMKEE. K21 is covalently cross-linked (Glycyl lysine isopeptide (Lys-Gly) (interchain with G-Cter in ubiquitin)). S36 carries the phosphoserine; by IKKA and IKKB modification. S40 bears the Phosphoserine; by IKKA, IKKB and IKKE mark. The residue at position 46 (Y46) is a Phosphotyrosine; by Tyr-kinases. ANK repeat units lie at residues 114-143, 147-176, 186-215, and 220-249; these read LSQTPLHLAVITDQAEIAEHLLKAGCDLDV, RGNTPLHIACQQGSLRSVSVLTQHCQPHHL, NGHTCLHLASIQGYLAVVEYLLSLGADVNA, and NGRTALHLAVDLQNSDLVSLLVKHGPDVNK.

It belongs to the NF-kappa-B inhibitor family. In terms of processing, phosphorylated at Ser-36 and Ser-40 by IKKA/CHUK and IKKB/IKBKB; disables inhibition of NF-kappa-B DNA-binding activity. Phosphorylation at positions 36 and 40 is prerequisite to polyubiquitination and subsequent degradation. Monoubiquitinated at Lys-21 following phosphorylation at Ser-36 and Ser-40. The resulting polyubiquitination leads to protein degradation. Post-translationally, hydroxylated by HIF1AN. Highly expressed in lymph node, thymus followed by liver, brain, muscle, kidney, gastrointestinal and reproductive tract.

The protein localises to the cytoplasm. The protein resides in the nucleus. Functionally, inhibits the activity of dimeric NF-kappa-B/REL complexes by trapping REL (RELA/p65 and NFKB1/p50) dimers in the cytoplasm by masking their nuclear localization signals. On cellular stimulation by immune and pro-inflammatory responses, becomes phosphorylated promoting ubiquitination and degradation, enabling the dimeric RELA to translocate to the nucleus and activate transcription. In Gallus gallus (Chicken), this protein is NF-kappa-B inhibitor alpha (NFKBIA).